The following is a 1024-amino-acid chain: Gamma-tubulin complex component 5 (1024 aa).

Disordered stretches follow at residues 155–203 (IGPY…LDPC) and 521–545 (TENE…SSRQ). Basic and acidic residues predominate over residues 189–203 (TPLEEQDQNRKLDPC). Low complexity predominate over residues 531–543 (ASASSGSDQGPSS).

It belongs to the TUBGCP family. Component of the gamma-tubulin ring complex (gTuRC) consisting of TUBGCP2, TUBGCP3, TUBGCP4, TUBGCP5 and TUBGCP6 and gamma-tubulin TUBG1 or TUBG2. TUBGCP2, TUBGCP3, TUBGCP4, TUBGCP5 and TUBGCP6 assemble in a 5:5:2:1:1 stoichiometry; each is associated with a gamma-tubulin, thereby arranging 14 gamma-tubulins in a helical manner. Gamma-tubulin at the first position is blocked by TUBGCP3 at the last position, allowing 13 protafilaments to grow into a microtubule. The gTuRC (via TUBGCP3 and TUBGCP6) interacts with ACTB and MZT1; the interactions form a luminal bridge that stabilizes the initial structure during complex assembly. The gTuRC (via TUBGCP2) interacts with MZT2A/MZT2B and CDK5RAP2 (via CM1 motif); the interactions play a role in gTuRC activation. As to expression, widely expressed, with highest levels in heart and skeletal muscle and moderate levels in brain.

It is found in the cytoplasm. Its subcellular location is the cytoskeleton. It localises to the microtubule organizing center. The protein resides in the centrosome. In terms of biological role, component of the gamma-tubulin ring complex (gTuRC) which mediates microtubule nucleation. The gTuRC regulates the minus-end nucleation of alpha-beta tubulin heterodimers that grow into microtubule protafilaments, a critical step in centrosome duplication and spindle formation. The polypeptide is Gamma-tubulin complex component 5 (TUBGCP5) (Homo sapiens (Human)).